Here is a 146-residue protein sequence, read N- to C-terminus: Large ribosomal subunit protein uL11 (146 aa).

Belongs to the universal ribosomal protein uL11 family. Part of the ribosomal stalk of the 50S ribosomal subunit. Interacts with L10 and the large rRNA to form the base of the stalk. L10 forms an elongated spine to which L12 dimers bind in a sequential fashion forming a multimeric L10(L12)X complex. Post-translationally, one or more lysine residues are methylated.

Functionally, forms part of the ribosomal stalk which helps the ribosome interact with GTP-bound translation factors. This is Large ribosomal subunit protein uL11 from Buchnera aphidicola subsp. Baizongia pistaciae (strain Bp).